Consider the following 322-residue polypeptide: Endochitinase (322 aa).

Positions 1–21 (MKMRYCVLVSVLAILVIRGSA) are cleaved as a signal peptide. A Chitin-binding type-1 domain is found at 22 to 62 (ENCGRQAGGALCPGGQCCSKWGWCGTTPDHCGTDCQSQCGG). Cystine bridges form between Cys-24–Cys-39, Cys-33–Cys-45, Cys-38–Cys-52, and Cys-56–Cys-60.

Belongs to the glycosyl hydrolase 19 family. Chitinase class I subfamily.

The enzyme catalyses Random endo-hydrolysis of N-acetyl-beta-D-glucosaminide (1-&gt;4)-beta-linkages in chitin and chitodextrins.. Its function is as follows. Defense against chitin-containing fungal pathogens. The polypeptide is Endochitinase (Actinidia chinensis var. chinensis (Chinese soft-hair kiwi)).